Consider the following 365-residue polypeptide: 3-dehydroquinate synthase (365 aa).

Residues 69–74, 103–107, 127–128, Lys-140, and Lys-149 each bind NAD(+); these read DGEAHK, GVIGD, and TT. Zn(2+) contacts are provided by Glu-182, His-245, and His-262.

This sequence belongs to the sugar phosphate cyclases superfamily. Dehydroquinate synthase family. Co(2+) is required as a cofactor. It depends on Zn(2+) as a cofactor. NAD(+) serves as cofactor.

The protein resides in the cytoplasm. It carries out the reaction 7-phospho-2-dehydro-3-deoxy-D-arabino-heptonate = 3-dehydroquinate + phosphate. It participates in metabolic intermediate biosynthesis; chorismate biosynthesis; chorismate from D-erythrose 4-phosphate and phosphoenolpyruvate: step 2/7. Functionally, catalyzes the conversion of 3-deoxy-D-arabino-heptulosonate 7-phosphate (DAHP) to dehydroquinate (DHQ). The sequence is that of 3-dehydroquinate synthase from Pseudomonas putida (strain ATCC 700007 / DSM 6899 / JCM 31910 / BCRC 17059 / LMG 24140 / F1).